A 678-amino-acid chain; its full sequence is NADPH--cytochrome P450 reductase (678 aa).

Glycine 2 carries the N-acetylglycine modification. Topologically, residues 2–22 (GDSNVDTGTTTSEMVAEEVSL) are lumenal. The chain crosses the membrane as a helical span at residues 23–43 (FSATDMVLFSLIVGLLTYWFI). Residues 44-678 (FRKKKDEVPE…KGRYSLDVWS (635 aa)) are Cytoplasmic-facing. Serine 63 carries the phosphoserine modification. In terms of domain architecture, Flavodoxin-like spans 80-224 (IIVFYGSQTG…DFITWREQFW (145 aa)). FMN is bound by residues 86–91 (SQTGTA), 138–141 (ATYG), 173–182 (LGNKTYEHFN), and aspartate 208. In terms of domain architecture, FAD-binding FR-type spans 279 to 521 (KNPFLAVVTT…FVRKSQFRLP (243 aa)). Position 298 (arginine 298) interacts with NADP(+). FAD-binding positions include arginine 424, 454–457 (RYYS), 472–474 (CAV), tyrosine 478, and 488–491 (GVAT). NADP(+) is bound by residues threonine 535, 596–597 (SR), 602–606 (KVYVQ), and aspartate 639. Tryptophan 677 contributes to the FAD binding site.

Belongs to the NADPH--cytochrome P450 reductase family. This sequence in the N-terminal section; belongs to the flavodoxin family. It in the C-terminal section; belongs to the flavoprotein pyridine nucleotide cytochrome reductase family. It depends on FAD as a cofactor. Requires FMN as cofactor.

It is found in the endoplasmic reticulum membrane. The catalysed reaction is 2 oxidized [cytochrome P450] + NADPH = 2 reduced [cytochrome P450] + NADP(+) + H(+). Its function is as follows. This enzyme is required for electron transfer from NADP to cytochrome P450 in microsomes. It can also provide electron transfer to heme oxygenase and cytochrome B5. This is NADPH--cytochrome P450 reductase from Sus scrofa (Pig).